The primary structure comprises 546 residues: Glutamate--tRNA ligase (546 aa).

The 'HIGH' region signature appears at 41 to 51 (PSPTGFQHIGG). The short motif at 293–297 (KLSKR) is the 'KMSKS' region element. Lys296 provides a ligand contact to ATP.

This sequence belongs to the class-I aminoacyl-tRNA synthetase family. Glutamate--tRNA ligase type 1 subfamily. Monomer.

It localises to the cytoplasm. It carries out the reaction tRNA(Glu) + L-glutamate + ATP = L-glutamyl-tRNA(Glu) + AMP + diphosphate. Its function is as follows. Catalyzes the attachment of glutamate to tRNA(Glu) in a two-step reaction: glutamate is first activated by ATP to form Glu-AMP and then transferred to the acceptor end of tRNA(Glu). This chain is Glutamate--tRNA ligase, found in Clostridium perfringens (strain 13 / Type A).